We begin with the raw amino-acid sequence, 447 residues long: Glycogen synthase (447 aa).

R15 serves as a coordination point for ADP-alpha-D-glucose.

The protein belongs to the glycosyltransferase 1 family. Bacterial/plant glycogen synthase subfamily.

It catalyses the reaction [(1-&gt;4)-alpha-D-glucosyl](n) + ADP-alpha-D-glucose = [(1-&gt;4)-alpha-D-glucosyl](n+1) + ADP + H(+). Its pathway is glycan biosynthesis; glycogen biosynthesis. Functionally, synthesizes alpha-1,4-glucan chains using ADP-glucose. In Deinococcus geothermalis (strain DSM 11300 / CIP 105573 / AG-3a), this protein is Glycogen synthase.